The chain runs to 801 residues: Cation/H(+) antiporter 28 (801 aa).

Helical transmembrane passes span 24–44 (ALKI…HYLM), 77–97 (SITL…VMGL), 113–133 (FIAY…TPFL), 140–160 (PYIF…PILT), 179–199 (AAGV…FIFF), 216–236 (LLMF…SPIF), 252–272 (GSHL…PTWP), 275–292 (SMYN…FLPN), 304–324 (INYL…GFII), 343–363 (LLGT…LLLG), 371–391 (SLGL…ALAI), and 403–423 (LIIF…MDII).

This sequence belongs to the monovalent cation:proton antiporter 2 (CPA2) transporter (TC 2.A.37) family. CHX (TC 2.A.37.4) subfamily. In terms of tissue distribution, specifically expressed in pollen.

It localises to the membrane. In terms of biological role, may operate as a cation/H(+) antiporter. The chain is Cation/H(+) antiporter 28 (CHX28) from Arabidopsis thaliana (Mouse-ear cress).